The following is a 551-amino-acid chain: Chaperonin GroEL 2 (551 aa).

ATP-binding positions include 30 to 33, Lys-51, 87 to 91, Gly-415, and Asp-496; these read TLGP and DGTTT.

The protein belongs to the chaperonin (HSP60) family. As to quaternary structure, forms a cylinder of 14 subunits composed of two heptameric rings stacked back-to-back. Interacts with the co-chaperonin GroES.

Its subcellular location is the cytoplasm. It carries out the reaction ATP + H2O + a folded polypeptide = ADP + phosphate + an unfolded polypeptide.. In terms of biological role, together with its co-chaperonin GroES, plays an essential role in assisting protein folding. The GroEL-GroES system forms a nano-cage that allows encapsulation of the non-native substrate proteins and provides a physical environment optimized to promote and accelerate protein folding. In Rhodopseudomonas palustris (strain BisB18), this protein is Chaperonin GroEL 2.